The chain runs to 400 residues: Succinate--glutarate CoA-transferase (400 aa).

The active-site Nucleophile is the D181.

This sequence belongs to the CoA-transferase III family.

The enzyme catalyses glutarate + succinyl-CoA = glutaryl-CoA + succinate. It functions in the pathway amino-acid degradation. It participates in cofactor biosynthesis; biotin biosynthesis. Is involved in L-lysine degradation and provides glutaryl-CoA for biotin synthesis. Catalyzes the conversion of glutarate to glutaryl-CoA via the transfer of CoA from succinyl-CoA. This chain is Succinate--glutarate CoA-transferase, found in Agrobacterium fabrum (strain C58 / ATCC 33970) (Agrobacterium tumefaciens (strain C58)).